We begin with the raw amino-acid sequence, 262 residues long: ABSCISIC ACID-INSENSITIVE 5-like protein 3 (262 aa).

Phosphoserine is present on residues Ser21, Ser43, and Ser66. Thr104 carries the post-translational modification Phosphothreonine. One can recognise a bZIP domain in the interval 190 to 253 (VERRQKRMIK…SEPPPDPKWK (64 aa)). The basic motif stretch occupies residues 192-211 (RRQKRMIKNRESAARSRARK). Residues 218 to 232 (LEIKVSRLEEENEKL) form a leucine-zipper region. Residues 239–252 (EKILPSEPPPDPKW) show a composition bias toward basic and acidic residues. The interval 239–262 (EKILPSEPPPDPKWKLRRTNSASL) is disordered.

The protein belongs to the bZIP family. ABI5 subfamily. DNA-binding heterodimer with ABI5/DPBF1, DPBF2 or AREB3/DPBF3. Interacts with the AFP proteins AFP2, AFP3 and AFP4. In terms of tissue distribution, predominantly expressed in seeds.

The protein localises to the nucleus. Its function is as follows. Binds to the embryo specification element and the ABA-responsive element (ABRE) of the Dc3 gene promoter and to the ABRE of the Em1 gene promoter. Could participate in abscisic acid-regulated gene expression during seed development. The sequence is that of ABSCISIC ACID-INSENSITIVE 5-like protein 3 (DPBF4) from Arabidopsis thaliana (Mouse-ear cress).